The primary structure comprises 327 residues: Diacylglycerol acyltransferase/mycolyltransferase Ag85B (327 aa).

Residues 1-38 (MIDVSGKIRAWGRWLLVGAAATLPSLISLAGGAATASA) form the signal peptide. Substrate is bound at residue 80–81 (LR). The segment at 96–106 (FEWYYQSGLSV) is fibronectin-binding. A disulfide bridge links C125 with C130. Residues S164 and D192 each coordinate substrate. S164 acts as the Nucleophile in catalysis. The active site involves E268. Substrate is bound by residues 270-273 (FVHG), K277, and 300-302 (HSW). H300 is a catalytic residue.

The protein belongs to the mycobacterial A85 antigen family.

The protein resides in the secreted. The catalysed reaction is 2 alpha,alpha'-trehalose 6-mycolate = alpha,alpha'-trehalose 6,6'-bismycolate + alpha,alpha-trehalose. It carries out the reaction an acyl-CoA + a 1,2-diacyl-sn-glycerol = a triacyl-sn-glycerol + CoA. Functionally, the antigen 85 proteins (FbpA, FbpB, FbpC) are responsible for the high affinity of mycobacteria for fibronectin, a large adhesive glycoprotein, which facilitates the attachment of M.tuberculosis to murine alveolar macrophages (AMs). They also help to maintain the integrity of the cell wall by catalyzing the transfer of mycolic acids to cell wall arabinogalactan and through the synthesis of alpha,alpha-trehalose dimycolate (TDM, cord factor). They catalyze the transfer of a mycoloyl residue from one molecule of alpha,alpha-trehalose monomycolate (TMM) to another TMM, leading to the formation of TDM. This is Diacylglycerol acyltransferase/mycolyltransferase Ag85B (fbpB) from Mycobacterium leprae (strain TN).